Here is a 511-residue protein sequence, read N- to C-terminus: Maturase K (511 aa).

It belongs to the intron maturase 2 family. MatK subfamily.

The protein resides in the plastid. It is found in the chloroplast. Functionally, usually encoded in the trnK tRNA gene intron. Probably assists in splicing its own and other chloroplast group II introns. The chain is Maturase K from Chloranthus spicatus (Chulantree).